Consider the following 365-residue polypeptide: 25S rRNA (uridine(2843)-N(3))-methyltransferase (365 aa).

The protein belongs to the class I-like SAM-binding methyltransferase superfamily.

The protein localises to the cytoplasm. Its subcellular location is the nucleus. It carries out the reaction uridine(2843) in 25S rRNA + S-adenosyl-L-methionine = N(3)-methyluridine(2843) in 25S rRNA + S-adenosyl-L-homocysteine + H(+). S-adenosyl-L-methionine-dependent methyltransferase that specifically methylates the N(3) position of uridine 2843 (m3U2843) in 25S rRNA. The chain is 25S rRNA (uridine(2843)-N(3))-methyltransferase (BMT6) from Saccharomyces cerevisiae (strain ATCC 204508 / S288c) (Baker's yeast).